Here is a 478-residue protein sequence, read N- to C-terminus: MSSYSESPKLPVREIPGDYGFPIISAIKDRYDYFYNQGEDAWFHGKAEKYKSTVVKINMAPGPFTSNDYKLVAFLDATSFVYMFDNTLIDKTDTLGGTFKPGKEYYGGYRPVAFVDTKDPNHAALKGYILSSFAKRHNLFIPLFRNSLSDHLFNDLEKQVSEQGKSDFNALLPNMTFGFIFRLLCDQTNPSDTVLGAQGPEHLRKWLFPQLIPSLSARKLPSFIEDLLFHNFLIPFGFVKSDYQKLVDAFSKSAVSMLDEAEKLGIKREEAVHNMLFLVGINMFAGLNAFFPHLIRFVGEAGPNLHTRLANEIRTAIKEEGGAITLSAINKMSLVKSVVYETLRLRPPVPLQYGKAKKDFMVQSHDASYKINKGQFLVGYNPMASRDPKIFANPDEFVPDRFMGDGEKMLKHVLWSNGRETENPAPENKQCAGKDLVQLLGRLILVEFFMRYDTFTVEITPLFRAPNVAIKTLTKATS.

Cys431 is a heme binding site.

The protein belongs to the cytochrome P450 family. 9-divinyl ether synthase subfamily.

The enzyme catalyses (9S)-hydroperoxy-(10E,12Z)-octadecadienoate = colneleate + H2O. Its function is as follows. Involved in the biosynthesis of the anti-fungal toxins colneleic acid and colnelenic acid. The polypeptide is 9-divinyl ether synthase (DES) (Capsicum annuum (Capsicum pepper)).